A 188-amino-acid polypeptide reads, in one-letter code: Elongation factor P (188 aa).

Lysine 34 carries the post-translational modification N6-(3,6-diaminohexanoyl)-5-hydroxylysine.

Belongs to the elongation factor P family. In terms of processing, may be beta-lysylated on the epsilon-amino group of Lys-34 by the combined action of EpmA and EpmB, and then hydroxylated on the C5 position of the same residue by EpmC (if this protein is present). Lysylation is critical for the stimulatory effect of EF-P on peptide-bond formation. The lysylation moiety may extend toward the peptidyltransferase center and stabilize the terminal 3-CCA end of the tRNA. Hydroxylation of the C5 position on Lys-34 may allow additional potential stabilizing hydrogen-bond interactions with the P-tRNA.

It localises to the cytoplasm. The protein operates within protein biosynthesis; polypeptide chain elongation. Its function is as follows. Involved in peptide bond synthesis. Alleviates ribosome stalling that occurs when 3 or more consecutive Pro residues or the sequence PPG is present in a protein, possibly by augmenting the peptidyl transferase activity of the ribosome. Modification of Lys-34 is required for alleviation. This Pseudoalteromonas translucida (strain TAC 125) protein is Elongation factor P.